Reading from the N-terminus, the 765-residue chain is Glucosamine inositolphosphorylceramide transferase 1 (765 aa).

Transmembrane regions (helical) follow at residues 43–63, 394–414, and 476–496; these read FFAS…WFVF, VILG…LGFL, and MGKF…CVGV. Residues N553, 577-582, 598-600, R628, and 683-687 contribute to the substrate site; these read NSLNNR, DDD, and FNCED. D600 is a Mn(2+) binding site. C685 and C738 are oxidised to a cystine. D687 is an active-site residue.

Belongs to the glycosyltransferase 64 family. Mn(2+) serves as cofactor. As to expression, specifically and highly expressed in developing embryos and mature seeds. Also detected at low levels in stigma and pollen.

It localises to the membrane. The catalysed reaction is an N-(2R-hydroxy-very-long-chain fatty acyl)-(R)-4-hydroxysphingoid base + a 1,2-diacyl-sn-glycero-3-phospho-(1D-myo-inositol) = a 1D-myo-inositol-1-phospho-N-[(R)-2-hydroxy-very-long-chain fatty acyl]-(R)-4-hydroxysphingoid base + a 1,2-diacyl-sn-glycerol. The protein operates within sphingolipid metabolism. Its function is as follows. Glycosyltransferase that mediates the glycosylation of glycosylinositol phosphorylceramides (GIPCs), the major sphingolipids in the plasma membrane; acts as a HexN(Ac)-specific GIPC sugar transferase and accepts glucosamine (GlcN) and N-acetylglucosamine (GlcNAc) as the sugar unit. Responsible for the glycosylation of a subgroup of GIPCs found in seeds and pollen that contain GlcNAc and GlcN (GlcN(Ac)). Maybe involved in the maintenance of cell-cell adhesion. The polypeptide is Glucosamine inositolphosphorylceramide transferase 1 (Arabidopsis thaliana (Mouse-ear cress)).